Here is a 301-residue protein sequence, read N- to C-terminus: HTH-type transcriptional activator NagR (301 aa).

One can recognise an HTH lysR-type domain in the interval 6–63 (IDLNLLVVFNQLLLDRSVSTAGEKLGLTQPAVSNSLKRLRAALKDDLFLRTSKGMEPT). The H-T-H motif DNA-binding region spans 23-42 (VSTAGEKLGLTQPAVSNSLK).

Belongs to the LysR transcriptional regulatory family.

Functionally, may regulate the expression of the naphthalene (nagA-F) and salicylate (nagG-M) metabolism genes. This Ralstonia sp protein is HTH-type transcriptional activator NagR.